Consider the following 521-residue polypeptide: BAR/IMD domain-containing adapter protein 2 (521 aa).

The IMD domain maps to 1–250 (MSLSRSEEMH…VQLMQQIASS (250 aa)). The stretch at 132–153 (DALDKCQAELKKLRKKSQGSKN) forms a coiled coil. A phosphoserine mark is found at serine 262, serine 324, serine 326, and serine 337. Positions 299–370 (VMNGVAGPDS…TLPRSSSMAA (72 aa)) are disordered. Over residues 321–335 (QPKSLSPPQSQSKLS) the composition is skewed to low complexity. Position 341 is a phosphothreonine (threonine 341). Serine 347 bears the Phosphoserine mark. Residues 349 to 368 (TPKNSYATTENKTLPRSSSM) are compositionally biased toward polar residues. Residue threonine 361 is modified to Phosphothreonine. 4 positions are modified to phosphoserine: serine 367, serine 385, serine 396, and serine 455. One can recognise an SH3 domain in the interval 375–438 (NGRMRVKAIF…PFSYTRVLDS (64 aa)). The disordered stretch occupies residues 445–480 (HMSLQQGKSSSTGNLLDKDDLAVPPPDYGTSSRAFP). Positions 447–458 (SLQQGKSSSTGN) are enriched in polar residues.

As to quaternary structure, homodimer. Interacts with CDC42 and RAC1 that have been activated by GTP binding. Interacts with ATN1, ADGRB1, DIAPH1, EPS8, SHANK1, SHANK2, SHANK3, TIAM1, WASF1 and WASF2. Interacts with ENAH after recruitment of CDC42. In terms of processing, phosphorylated on tyrosine residues by INSR in response to insulin treatment.

The protein localises to the cytoplasm. Its subcellular location is the membrane. It is found in the cell projection. It localises to the filopodium. The protein resides in the ruffle. The protein localises to the cytoskeleton. Adapter protein that links membrane-bound small G-proteins to cytoplasmic effector proteins. Necessary for CDC42-mediated reorganization of the actin cytoskeleton and for RAC1-mediated membrane ruffling. Involved in the regulation of the actin cytoskeleton by WASF family members and the Arp2/3 complex. Plays a role in neurite growth. Acts syngeristically with ENAH to promote filipodia formation. Plays a role in the reorganization of the actin cytoskeleton in response to bacterial infection. Participates in actin bundling when associated with EPS8, promoting filopodial protrusions. This is BAR/IMD domain-containing adapter protein 2 (BAIAP2) from Cricetulus griseus (Chinese hamster).